Here is a 218-residue protein sequence, read N- to C-terminus: Uracil-DNA glycosylase (218 aa).

Asp59 acts as the Proton acceptor in catalysis.

The protein belongs to the uracil-DNA glycosylase (UDG) superfamily. UNG family.

It is found in the cytoplasm. The catalysed reaction is Hydrolyzes single-stranded DNA or mismatched double-stranded DNA and polynucleotides, releasing free uracil.. Functionally, excises uracil residues from the DNA which can arise as a result of misincorporation of dUMP residues by DNA polymerase or due to deamination of cytosine. The chain is Uracil-DNA glycosylase from Staphylococcus aureus (strain bovine RF122 / ET3-1).